Reading from the N-terminus, the 330-residue chain is MTVIVTGAAGFIGANIVKALNERGESRIIAVDNLTRADKFRNLVDCEIDDYLDKTEFVERFTRGDFGKVRAVFHEGACSDTMETDGRYMMDNNFRYSRAVLDACLAQGAQFLYASSAAIYGGSTRFVEEREVEAPLNVYGYSKFLFDQVIRRVLPSAKSQIAGFRYFNVYGPRETHKGRMASVAFHNFNQFRAEGKVKLFGEYNGYAPGEQTRDFVSVEDVAKVNLFFFDHPEKSGIFNLGTGRAQPFNDIASTVVNTLRALDNLPPLTLAQQVEQGLIEYVAFPDALRGKYQCFTQADQTKLRSAGYDAPFLTVQEGVDRYVRWLSGQV.

NADP(+) is bound by residues 11–12 (FI), 32–33 (DN), K39, K54, 75–79 (EGACS), and N92. Residue Y139 is the Proton acceptor of the active site. K143 provides a ligand contact to NADP(+). N168 is a substrate binding site. The NADP(+) site is built by V169 and K177. K177 (proton acceptor) is an active-site residue. Substrate is bound by residues R179, H186, 200-203 (FGEY), R213, and Y292.

It belongs to the NAD(P)-dependent epimerase/dehydratase family. HldD subfamily. Homopentamer. NADP(+) serves as cofactor.

It carries out the reaction ADP-D-glycero-beta-D-manno-heptose = ADP-L-glycero-beta-D-manno-heptose. The protein operates within nucleotide-sugar biosynthesis; ADP-L-glycero-beta-D-manno-heptose biosynthesis; ADP-L-glycero-beta-D-manno-heptose from D-glycero-beta-D-manno-heptose 7-phosphate: step 4/4. Its function is as follows. Catalyzes the interconversion between ADP-D-glycero-beta-D-manno-heptose and ADP-L-glycero-beta-D-manno-heptose via an epimerization at carbon 6 of the heptose. The polypeptide is ADP-L-glycero-D-manno-heptose-6-epimerase (Burkholderia ambifaria (strain ATCC BAA-244 / DSM 16087 / CCUG 44356 / LMG 19182 / AMMD) (Burkholderia cepacia (strain AMMD))).